Here is a 286-residue protein sequence, read N- to C-terminus: Phosphate import ATP-binding protein PstB (286 aa).

The disordered stretch occupies residues 1–27 (MEPKETLRQRWPGRGRTEETGAMKKSD). Over residues 15-27 (GRTEETGAMKKSD) the composition is skewed to basic and acidic residues. The region spanning 33 to 281 (MTVEHLNMYY…PDRKETEDYV (249 aa)) is the ABC transporter domain. 65–72 (GPSGCGKS) provides a ligand contact to ATP.

It belongs to the ABC transporter superfamily. Phosphate importer (TC 3.A.1.7) family. As to quaternary structure, the complex is composed of two ATP-binding proteins (PstB), two transmembrane proteins (PstC and PstA) and a solute-binding protein (PstS).

It is found in the cell membrane. The enzyme catalyses phosphate(out) + ATP + H2O = ADP + 2 phosphate(in) + H(+). Its function is as follows. Part of the ABC transporter complex PstSACB involved in phosphate import. Responsible for energy coupling to the transport system. This is Phosphate import ATP-binding protein PstB from Rubrobacter xylanophilus (strain DSM 9941 / JCM 11954 / NBRC 16129 / PRD-1).